The primary structure comprises 216 residues: Octanoyltransferase (216 aa).

One can recognise a BPL/LPL catalytic domain in the interval 33–216; that stretch reads AQTADELWIV…AEKLTRHLSG (184 aa). Substrate-binding positions include 72 to 79, 148 to 150, and 162 to 164; these read RGGEVTYH, ALG, and GVS. Residue cysteine 180 is the Acyl-thioester intermediate of the active site.

The protein belongs to the LipB family.

The protein resides in the cytoplasm. The enzyme catalyses octanoyl-[ACP] + L-lysyl-[protein] = N(6)-octanoyl-L-lysyl-[protein] + holo-[ACP] + H(+). It functions in the pathway protein modification; protein lipoylation via endogenous pathway; protein N(6)-(lipoyl)lysine from octanoyl-[acyl-carrier-protein]: step 1/2. In terms of biological role, catalyzes the transfer of endogenously produced octanoic acid from octanoyl-acyl-carrier-protein onto the lipoyl domains of lipoate-dependent enzymes. Lipoyl-ACP can also act as a substrate although octanoyl-ACP is likely to be the physiological substrate. In Herminiimonas arsenicoxydans, this protein is Octanoyltransferase.